The following is a 247-amino-acid chain: Myelin-oligodendrocyte glycoprotein (247 aa).

The N-terminal stretch at 1–29 (MASLSRPSLPSCLCSFLLLLLLQVSSSYA) is a signal peptide. Topologically, residues 30-154 (GQFRVIGPRH…EDPFYWVSPG (125 aa)) are extracellular. Positions 32-145 (FRVIGPRHPI…EEAAMELKVE (114 aa)) constitute an Ig-like V-type domain. Cys53 and Cys127 form a disulfide bridge. N-linked (GlcNAc...) asparagine glycosylation occurs at Asn60. The helical transmembrane segment at 155 to 175 (VLVLLAVLPVLLLQITVGLIF) threads the bilayer. At 176–210 (LCLQYRLRGKLRAEIENLHRTFDPHFLRVPCWKIT) the chain is on the cytoplasmic side. Residues 211 to 231 (LFVIVPVLGPLVALIICYNWL) form a helical membrane-spanning segment. At 232 to 247 (HRRLAGQFLEELRNPF) the chain is on the extracellular side.

This sequence belongs to the immunoglobulin superfamily. BTN/MOG family. As to quaternary structure, homodimer. May form heterodimers between the different isoforms. (Microbial infection) Interacts with rubella virus E2 glycoprotein. As to expression, found exclusively in the CNS, where it is localized on the surface of myelin and oligodendrocyte cytoplasmic membranes.

Its subcellular location is the cell membrane. Functionally, mediates homophilic cell-cell adhesion. Minor component of the myelin sheath. May be involved in completion and/or maintenance of the myelin sheath and in cell-cell communication. (Microbial infection) Acts as a receptor for rubella virus. This is Myelin-oligodendrocyte glycoprotein (MOG) from Homo sapiens (Human).